Here is a 276-residue protein sequence, read N- to C-terminus: D-apionate oxidoisomerase (276 aa).

Residues 12-14 (GKM), E33, and D69 each bind NAD(+). Zn(2+)-binding residues include H114 and E184.

Belongs to the ApnO family. It depends on Zn(2+) as a cofactor.

The enzyme catalyses D-apionate + NAD(+) = 3-oxoisoapionate + NADH + H(+). It participates in carbohydrate metabolism. Involved in catabolism of D-apiose. Catalyzes the conversion of D-apionate to 3-oxo-isoapionate. The polypeptide is D-apionate oxidoisomerase (Cupriavidus necator (strain ATCC 43291 / DSM 13513 / CCUG 52238 / LMG 8453 / N-1) (Ralstonia eutropha)).